A 235-amino-acid chain; its full sequence is Putative quercetin 2,3-dioxygenase ZMO1337 (235 aa).

Positions 57, 59, 101, and 103 each coordinate a divalent metal cation.

This sequence belongs to the pirin family. It depends on a divalent metal cation as a cofactor.

It carries out the reaction quercetin + O2 = 2-(3,4-dihydroxybenzoyloxy)-4,6-dihydroxybenzoate + CO. Its pathway is flavonoid metabolism; quercetin degradation. Putative quercetin 2,3-dioxygenase. This is Putative quercetin 2,3-dioxygenase ZMO1337 from Zymomonas mobilis subsp. mobilis (strain ATCC 31821 / ZM4 / CP4).